The sequence spans 437 residues: Glutamate-1-semialdehyde 2,1-aminomutase (437 aa).

Position 279 is an N6-(pyridoxal phosphate)lysine (Lys-279).

Belongs to the class-III pyridoxal-phosphate-dependent aminotransferase family. HemL subfamily. In terms of assembly, homodimer. Pyridoxal 5'-phosphate is required as a cofactor.

It localises to the cytoplasm. It carries out the reaction (S)-4-amino-5-oxopentanoate = 5-aminolevulinate. It participates in porphyrin-containing compound metabolism; protoporphyrin-IX biosynthesis; 5-aminolevulinate from L-glutamyl-tRNA(Glu): step 2/2. The sequence is that of Glutamate-1-semialdehyde 2,1-aminomutase from Sorangium cellulosum (strain So ce56) (Polyangium cellulosum (strain So ce56)).